We begin with the raw amino-acid sequence, 502 residues long: Thermosome subunit beta (502 aa).

Belongs to the TCP-1 chaperonin family. As to quaternary structure, forms a Heterooligomeric complex of two stacked eight-membered rings.

Functionally, molecular chaperone; binds unfolded polypeptides in vitro, and has a weak ATPase activity. The protein is Thermosome subunit beta (thsB) of Desulfurococcus mucosus (Desulfurococcus mobilis).